The sequence spans 219 residues: UPF0173 metal-dependent hydrolase LSL_0324 (219 aa).

The protein belongs to the UPF0173 family.

The chain is UPF0173 metal-dependent hydrolase LSL_0324 from Ligilactobacillus salivarius (strain UCC118) (Lactobacillus salivarius).